The sequence spans 183 residues: Large ribosomal subunit protein eL18 (183 aa).

A disordered region spans residues 150–183; sequence RHFGPAPGAPRSHTKPYVRTKGHERARPRRRSNV. Residues 161–183 are compositionally biased toward basic residues; that stretch reads SHTKPYVRTKGHERARPRRRSNV.

Belongs to the eukaryotic ribosomal protein eL18 family.

It localises to the cytoplasm. This chain is Large ribosomal subunit protein eL18 (RpL18), found in Spodoptera frugiperda (Fall armyworm).